The following is a 355-amino-acid chain: UDP-3-O-acylglucosamine N-acyltransferase (355 aa).

His258 functions as the Proton acceptor in the catalytic mechanism.

It belongs to the transferase hexapeptide repeat family. LpxD subfamily. Homotrimer.

The enzyme catalyses a UDP-3-O-[(3R)-3-hydroxyacyl]-alpha-D-glucosamine + a (3R)-hydroxyacyl-[ACP] = a UDP-2-N,3-O-bis[(3R)-3-hydroxyacyl]-alpha-D-glucosamine + holo-[ACP] + H(+). The protein operates within bacterial outer membrane biogenesis; LPS lipid A biosynthesis. Its function is as follows. Catalyzes the N-acylation of UDP-3-O-acylglucosamine using 3-hydroxyacyl-ACP as the acyl donor. Is involved in the biosynthesis of lipid A, a phosphorylated glycolipid that anchors the lipopolysaccharide to the outer membrane of the cell. This chain is UDP-3-O-acylglucosamine N-acyltransferase, found in Rhizobium rhizogenes (strain K84 / ATCC BAA-868) (Agrobacterium radiobacter).